The chain runs to 1444 residues: MTAKEEEKQERFQLLMTQIGLQDVTTYEEFTKDAKIEKLIADKKNKTWQFHLHVPQIFPAPLFHMMDVGMKRAFSQIAETEMQIVPENQTINETLIQEYWNLIVEPIGKQSPMIGKLLMEQKPTFKEPHFIEVAVHNDMEEATIQQRFQAKIIENYGKAGFPRLAMKMHMLDQSESDEYKAFAQAKQEEDQKKAAEAVQVMQKRQAEGQNGNSSAAPLSGPFQIGYKIKDDEEIKRLGDVYDEERRITVQGLIFATEIRELRSGRSLLQFKITDYTSSMIIKMFSRDNEDAAMFQNLKKGMWVKVRGSVQNDTFVRDLIMMAQDINEIAGVKRLDTAEEKRAELHLHSPMSQMDATSSVDSLFKQAADWGHKAIAITDHSVAQSFPEAYGAGQKYGLKVIFGIEANLIDDGVPIAYNDQHIGLQDATYCVFDVETTGLSAVYDTIIELAGVKMKNGEIIDKFEAFIDPGHPLSATTINLTGITDDMVKGSDPIDVVLKRFKEWSGDDILVAHNASFDMGFINTAYEKVGLEKADNAVVDTLELARFLYPHFKNHRLNTLTKKFNIILEQHHRAVFDAEATAYLAWKLIKDAKEMHDINFHDSLNDYMGEGDAYKRARPFHATIYAQTDVGLKNLFKLITMSNINYFYRVPRIPRSQLKKLREGLIVGTACSQGELFEAMMQKGMQAAEKVVEFYDFIEIQPKPVYAPLIERELVRDEKALEEILKNIVRVGEKAGKPVVATGNVHYKDPVDKIYRKILIHSQGGANPLNRAELPDVHFRSTDEMLKEFAFLGEEKAKEVVVTNSNLVVDWMEELKPIKDELYTPKIDGAEDEVRNMSYDMAHQLYGENLPEIVEARLEKELKSIIGHGFAVIYLISHKLVKKSLVDGYLVGSRGSVGSSFVATMTEITEVNPLPPHYLCPNCKDSEFFDDGSVGSGFDLPDKECPHCGTAYQKEGQDIPFETFLGFKGDKVPDIDLNFSGDYQPVAHAYTKEIFGEDYVFRAGTIGTVAEKTAFGYVRNYERDMNMTIRGAEIDRLVAGCTGVKRTTGQHPGGIIVIPDYMDVYDFTPVQFPADATDSEWKTTHFDFHSIHDNVLKLDILGHDDPTAIRMLQDLSGIDPKTIPTDDPDVMKLFGSTESLGVKPADIDSKTGTLGIPEFGTRFVRQMLEQTKPTTFSELVQISGLSHGTDVWLGNAEELIKNKTCELPDVIGCRDDIMVFLIYQGLESSLAFKIMESVRKGKGLTEEMEEAMMANKVPLWYIESCKKIKYMFPKAHAAAYVLMAVRIAYFKVHYPLYFYATYFTVRADDFDLTSMVNGKEAVKATMKEVNDKGMEASTKEKNLLTVLEIANEMLARGFHFQKVDLYKSSADEFIIDGDSLIPPFNAIPSLGTNVAKQIVAARENGEFLSKEDLQQRGKVSKTIIQYMDDQGCLEGLPDQNQLSLF.

Residues 196–218 form a disordered region; the sequence is EAVQVMQKRQAEGQNGNSSAAPL. The span at 207–216 shows a compositional bias: polar residues; it reads EGQNGNSSAA. One can recognise an Exonuclease domain in the interval 428 to 584; sequence YCVFDVETTG…FDAEATAYLA (157 aa).

The protein belongs to the DNA polymerase type-C family. PolC subfamily.

The protein resides in the cytoplasm. It catalyses the reaction DNA(n) + a 2'-deoxyribonucleoside 5'-triphosphate = DNA(n+1) + diphosphate. In terms of biological role, required for replicative DNA synthesis. This DNA polymerase also exhibits 3' to 5' exonuclease activity. This is DNA polymerase III PolC-type from Listeria welshimeri serovar 6b (strain ATCC 35897 / DSM 20650 / CCUG 15529 / CIP 8149 / NCTC 11857 / SLCC 5334 / V8).